Consider the following 392-residue polypeptide: ATP phosphoribosyltransferase regulatory subunit (392 aa).

Belongs to the class-II aminoacyl-tRNA synthetase family. HisZ subfamily. In terms of assembly, heteromultimer composed of HisG and HisZ subunits.

The protein resides in the cytoplasm. The protein operates within amino-acid biosynthesis; L-histidine biosynthesis; L-histidine from 5-phospho-alpha-D-ribose 1-diphosphate: step 1/9. Its function is as follows. Required for the first step of histidine biosynthesis. May allow the feedback regulation of ATP phosphoribosyltransferase activity by histidine. This Prochlorococcus marinus (strain MIT 9303) protein is ATP phosphoribosyltransferase regulatory subunit.